A 128-amino-acid chain; its full sequence is Anion exchange transporter (128 aa).

Topologically, residues 1-14 are extracellular; sequence LFSFKELNEQFKRK. The chain crosses the membrane as a helical span at residues 15-35; sequence IKVVLPVDLVLIIAASFACYC. Over 36–66 the chain is Cytoplasmic; sequence TNMENTYGLEVVGHIPRGIPPPRAPPMNILS. A helical transmembrane segment spans residues 67–87; that stretch reads AVITEAFGVALVGYAASLALA. Residues 88–103 lie on the Extracellular side of the membrane; the sequence is QGSAKKFKYSVDDNQE. Residues 104–124 form a helical membrane-spanning segment; the sequence is FLAHGLSNVISSFLFCIPSAA. Topologically, residues 125 to 128 are cytoplasmic; it reads AMGR.

The protein belongs to the SLC26A/SulP transporter (TC 2.A.53) family. In terms of tissue distribution, expressed in gastric epithelium, predominantly in the gastric parietal cells but also at lower levels in mucosal cells.

The protein resides in the basolateral cell membrane. It localises to the recycling endosome membrane. It is found in the apical cell membrane. Its subcellular location is the lateral cell membrane. The catalysed reaction is chloride(in) = chloride(out). The enzyme catalyses iodide(out) = iodide(in). It carries out the reaction bromide(in) = bromide(out). It catalyses the reaction oxalate(in) = oxalate(out). The catalysed reaction is nitrate(in) = nitrate(out). The enzyme catalyses sulfate(in) = sulfate(out). It carries out the reaction D-gluconate(in) = D-gluconate(out). It catalyses the reaction thiocyanate(in) = thiocyanate(out). The catalysed reaction is hydrogencarbonate(in) = hydrogencarbonate(out). The enzyme catalyses hydrogencarbonate(in) + chloride(out) = hydrogencarbonate(out) + chloride(in). Acts as an anion channel mediating the transport of chloride, bromide, iodide, nitrate, sulfate, gluconate, thiocyanate, oxalate and bicarbonate ions. Its permeability towards bicarbonate is weak and increases when pH is above 7. Mediates thiocyanate transport in retinal pigment epithelium cells. Mediates iodide transport in the thyroid gland, playing an important role in the synthesis of thyroid hormones and the maintenance of thyroid function. This chain is Anion exchange transporter, found in Oryctolagus cuniculus (Rabbit).